Reading from the N-terminus, the 242-residue chain is ATP-dependent dethiobiotin synthetase BioD (242 aa).

Glutamate 12 to valine 17 provides a ligand contact to ATP. Threonine 16 lines the Mg(2+) pocket. Residue lysine 37 is part of the active site. Serine 41 is a binding site for substrate. ATP is bound by residues aspartate 51 and glutamate 112–glycine 115. Aspartate 51 and glutamate 112 together coordinate Mg(2+).

This sequence belongs to the dethiobiotin synthetase family. Homodimer. Mg(2+) is required as a cofactor.

It is found in the cytoplasm. It carries out the reaction (7R,8S)-7,8-diammoniononanoate + CO2 + ATP = (4R,5S)-dethiobiotin + ADP + phosphate + 3 H(+). The protein operates within cofactor biosynthesis; biotin biosynthesis; biotin from 7,8-diaminononanoate: step 1/2. Functionally, catalyzes a mechanistically unusual reaction, the ATP-dependent insertion of CO2 between the N7 and N8 nitrogen atoms of 7,8-diaminopelargonic acid (DAPA, also called 7,8-diammoniononanoate) to form a ureido ring. The protein is ATP-dependent dethiobiotin synthetase BioD of Bacillus thuringiensis (strain Al Hakam).